Consider the following 392-residue polypeptide: Protein FAM53C (392 aa).

Met1 is subject to N-acetylmethionine. Positions 76 to 120 are disordered; that stretch reads LHLRPPSPGSSPQEQSLSQVLSPEPPDPEKLPVPPAPPSKRHCRS. Low complexity predominate over residues 85 to 97; it reads SSPQEQSLSQVLS. Residues Ser122 and Ser162 each carry the phosphoserine modification. Disordered stretches follow at residues 141–167 and 201–294; these read LWTP…PKRV and DSSH…EDPR. Over residues 201 to 215 the composition is skewed to polar residues; the sequence is DSSHPSAASPQSGSW. Ser232, Ser234, Ser255, and Ser273 each carry phosphoserine. Residues 241–256 are compositionally biased toward low complexity; it reads ASRFLPSARSSPASSP. Basic and acidic residues predominate over residues 278-294; it reads LDARKAGVKRRHEEDPR. Ser299 is modified (phosphoserine).

It belongs to the FAM53 family.

This Bos taurus (Bovine) protein is Protein FAM53C.